The primary structure comprises 91 residues: Small ribosomal subunit protein uS19 (91 aa).

The protein belongs to the universal ribosomal protein uS19 family.

Functionally, protein S19 forms a complex with S13 that binds strongly to the 16S ribosomal RNA. The protein is Small ribosomal subunit protein uS19 of Sphingopyxis alaskensis (strain DSM 13593 / LMG 18877 / RB2256) (Sphingomonas alaskensis).